The chain runs to 604 residues: Testis-expressed protein 13C-1 (604 aa).

Disordered regions lie at residues 314–337 (EGEG…SHKD), 374–397 (PVMP…RPKI), 485–523 (CLNA…HPRK), and 538–580 (ATKQ…SANC). The span at 322-333 (QGTSLHGDSSNN) shows a compositional bias: polar residues. Residues 544-572 (KQPEGIKSLESKQPQETKSSESKQQEKPL) show a composition bias toward basic and acidic residues.

It belongs to the TEX13 family.

Its function is as follows. Plays a role in transcriptional repression. The chain is Testis-expressed protein 13C-1 from Mus musculus (Mouse).